Here is a 145-residue protein sequence, read N- to C-terminus: NADH-quinone oxidoreductase subunit A (145 aa).

3 helical membrane passes run 14 to 34, 66 to 86, and 96 to 116; these read FAVFLIVSIGLCCLMLAGAWF, FYLVAMFFVIFDVEALYLYAW, and VGFVEAAIFILVLLAGLFYLV.

Belongs to the complex I subunit 3 family. In terms of assembly, NDH-1 is composed of 13 different subunits. Subunits NuoA, H, J, K, L, M, N constitute the membrane sector of the complex.

It is found in the cell inner membrane. It catalyses the reaction a quinone + NADH + 5 H(+)(in) = a quinol + NAD(+) + 4 H(+)(out). Functionally, NDH-1 shuttles electrons from NADH, via FMN and iron-sulfur (Fe-S) centers, to quinones in the respiratory chain. The immediate electron acceptor for the enzyme in this species is believed to be ubiquinone. Couples the redox reaction to proton translocation (for every two electrons transferred, four hydrogen ions are translocated across the cytoplasmic membrane), and thus conserves the redox energy in a proton gradient. The protein is NADH-quinone oxidoreductase subunit A of Erwinia tasmaniensis (strain DSM 17950 / CFBP 7177 / CIP 109463 / NCPPB 4357 / Et1/99).